The sequence spans 397 residues: Nuclear egress protein 2 (397 aa).

At 1 to 358 (MEMNKVLHQD…GPSRPQSGPW (358 aa)) the chain is on the perinuclear space side. 2 disordered regions span residues 205-245 (RTAG…PPPP) and 291-332 (AAAG…PSLE). The residue at position 216 (S216) is a Phosphoserine. Composition is skewed to low complexity over residues 224–239 (PSCSPTMVAAGGAAAG) and 291–301 (AAAGQDVGGSA). Residues 310-322 (SRRRGVSTHHRHP) are compositionally biased toward basic residues. The chain crosses the membrane as a helical span at residues 359-381 (LPARFATLGPLVLALLLVLALLW). Topologically, residues 382 to 397 (RGHGQSSSPTRSAHRD) are nuclear.

The protein belongs to the herpesviridae NEC2 protein family. In terms of assembly, forms a heterohexameric complex with NEC1. Interacts with host UBA7 and RNF170; this interaction promotes UBA7 proteasomal degradation. Post-translationally, phosphorylated. Phosphorylation by viral kinase UL97 at Ser-216 plays an important role for correct viral nuclear egress complex (NEC) localization.

It is found in the host nucleus inner membrane. Functionally, plays an essential role in virion nuclear egress, the first step of virion release from infected cell. Within the host nucleus, NEC1 interacts with the newly formed capsid through the vertexes and directs it to the inner nuclear membrane by associating with NEC2. Induces the budding of the capsid at the inner nuclear membrane as well as its envelopment into the perinuclear space. There, the NEC1/NEC2 complex promotes the fusion of the enveloped capsid with the outer nuclear membrane and the subsequent release of the viral capsid into the cytoplasm where it will reach the secondary budding sites in the host Golgi or trans-Golgi network. Inhibits host ISGylation and subsequent innate antiviral response by targeting host UBA7 for proteasomal degradation. The protein is Nuclear egress protein 2 of Human cytomegalovirus (strain AD169) (HHV-5).